The sequence spans 321 residues: Olfactory receptor 14J1 (321 aa).

The Extracellular portion of the chain corresponds to 1–23 (MVNLTSMSGFLLMGFSDERKLQI). N-linked (GlcNAc...) asparagine glycosylation is present at Asn-3. The helical transmembrane segment at 24–44 (LHALVFLVTYLLALTGNLLII) threads the bilayer. Residues 45–52 (TIITVDRR) lie on the Cytoplasmic side of the membrane. A helical membrane pass occupies residues 53–73 (LHSPMYYFLKHLSLLDLCFIS). The Extracellular portion of the chain corresponds to 74-97 (VTVPQSIANSLMGNGYISLVQCIL). Residues Cys-95 and Cys-187 are joined by a disulfide bond. Residues 98–118 (QVFFFIALASSEVAILTVMSY) form a helical membrane-spanning segment. Over 119–137 (DRYAAICQPLHYETIMDPR) the chain is Cytoplasmic. A helical transmembrane segment spans residues 138–158 (ACRHAVIAVWIAGGLSGLMHA). Residues 159 to 194 (AINFSIPLCGKRVIHQFFCDVPQMLKLACSYEFINE) are Extracellular-facing. The chain crosses the membrane as a helical span at residues 195–215 (IALAAFTTSAAFICLISIVLS). Residues 216 to 235 (YIRIFSTVLRIPSAEGRTKV) lie on the Cytoplasmic side of the membrane. Residues 236-256 (FSTCLPHLFVATFFLSAAGFE) traverse the membrane as a helical segment. At 257–269 (FLRLPSDSSSTVD) the chain is on the extracellular side. A helical transmembrane segment spans residues 270 to 290 (LVFSVFYTVIPPTLNPVIYSL). Residues 291 to 321 (RNDSMKAALRKMLSKEELPQRKMCLKAMFKL) are Cytoplasmic-facing.

The protein belongs to the G-protein coupled receptor 1 family.

The protein localises to the cell membrane. Functionally, odorant receptor. The protein is Olfactory receptor 14J1 (OR14J1) of Homo sapiens (Human).